We begin with the raw amino-acid sequence, 252 residues long: Ubiquinone biosynthesis O-methyltransferase (252 aa).

Positions 51, 70, 91, and 136 each coordinate S-adenosyl-L-methionine.

The protein belongs to the methyltransferase superfamily. UbiG/COQ3 family.

It carries out the reaction a 3-demethylubiquinol + S-adenosyl-L-methionine = a ubiquinol + S-adenosyl-L-homocysteine + H(+). The catalysed reaction is a 3-(all-trans-polyprenyl)benzene-1,2-diol + S-adenosyl-L-methionine = a 2-methoxy-6-(all-trans-polyprenyl)phenol + S-adenosyl-L-homocysteine + H(+). Its pathway is cofactor biosynthesis; ubiquinone biosynthesis. In terms of biological role, O-methyltransferase that catalyzes the 2 O-methylation steps in the ubiquinone biosynthetic pathway. The protein is Ubiquinone biosynthesis O-methyltransferase of Albidiferax ferrireducens (strain ATCC BAA-621 / DSM 15236 / T118) (Rhodoferax ferrireducens).